The chain runs to 254 residues: Phosphate import ATP-binding protein PstB (254 aa).

The ABC transporter domain maps to 7-249 (MVAESMSFYY…PREKQTEDYI (243 aa)). 39 to 46 (GPSGCGKS) contributes to the ATP binding site.

This sequence belongs to the ABC transporter superfamily. Phosphate importer (TC 3.A.1.7) family. In terms of assembly, the complex is composed of two ATP-binding proteins (PstB), two transmembrane proteins (PstC and PstA) and a solute-binding protein (PstS).

The protein localises to the cell inner membrane. The enzyme catalyses phosphate(out) + ATP + H2O = ADP + 2 phosphate(in) + H(+). Its function is as follows. Part of the ABC transporter complex PstSACB involved in phosphate import. Responsible for energy coupling to the transport system. The sequence is that of Phosphate import ATP-binding protein PstB from Chlorobium chlorochromatii (strain CaD3).